A 554-amino-acid chain; its full sequence is Phospho-2-dehydro-3-deoxyheptonate aldolase 1, chloroplastic (554 aa).

The N-terminal 39 residues, 1-39 (MSLATSSSMAGGAAVVPRSATATTASAFVTMKRRATAVR), are a transit peptide targeting the chloroplast. Residues 41–70 (VHAAEPSKNPPVGVPSAAKTSSPSVAAPEK) are disordered.

The protein belongs to the class-II DAHP synthase family.

Its subcellular location is the plastid. It is found in the chloroplast. The catalysed reaction is D-erythrose 4-phosphate + phosphoenolpyruvate + H2O = 7-phospho-2-dehydro-3-deoxy-D-arabino-heptonate + phosphate. The protein operates within metabolic intermediate biosynthesis; chorismate biosynthesis; chorismate from D-erythrose 4-phosphate and phosphoenolpyruvate: step 1/7. The protein is Phospho-2-dehydro-3-deoxyheptonate aldolase 1, chloroplastic (DAHPS1) of Oryza sativa subsp. japonica (Rice).